The chain runs to 618 residues: Indolepyruvate oxidoreductase subunit IorA (618 aa).

2 consecutive 4Fe-4S ferredoxin-type domains span residues 559-590 (RPVR…DGRV) and 588-617 (GRVF…PEGK). 8 residues coordinate [4Fe-4S] cluster: Cys568, Cys571, Cys574, Cys580, Cys597, Cys600, Cys603, and Cys607.

As to quaternary structure, heterodimer of the IorA and IorB subunits. [4Fe-4S] cluster serves as cofactor.

It carries out the reaction indole-3-pyruvate + 2 oxidized [2Fe-2S]-[ferredoxin] + CoA = (indol-3-yl)acetyl-CoA + 2 reduced [2Fe-2S]-[ferredoxin] + CO2 + H(+). Its function is as follows. Catalyzes the ferredoxin-dependent oxidative decarboxylation of arylpyruvates. The polypeptide is Indolepyruvate oxidoreductase subunit IorA (iorA) (Methanothermobacter marburgensis (strain ATCC BAA-927 / DSM 2133 / JCM 14651 / NBRC 100331 / OCM 82 / Marburg) (Methanobacterium thermoautotrophicum)).